Reading from the N-terminus, the 210-residue chain is Redox-sensing transcriptional repressor Rex (210 aa).

Positions 17-56 form a DNA-binding region, H-T-H motif; sequence KYHRYLYELLKNDVDRISSKELSEKIGFTASQIRQDLNCF. Residue 91 to 96 coordinates NAD(+); the sequence is GAGNIG.

The protein belongs to the transcriptional regulatory Rex family. Homodimer.

Its subcellular location is the cytoplasm. Modulates transcription in response to changes in cellular NADH/NAD(+) redox state. This chain is Redox-sensing transcriptional repressor Rex, found in Clostridium botulinum (strain Loch Maree / Type A3).